Here is a 246-residue protein sequence, read N- to C-terminus: Small ribosomal subunit protein uS2 (246 aa).

It belongs to the universal ribosomal protein uS2 family.

The sequence is that of Small ribosomal subunit protein uS2 from Burkholderia thailandensis (strain ATCC 700388 / DSM 13276 / CCUG 48851 / CIP 106301 / E264).